A 625-amino-acid polypeptide reads, in one-letter code: MAU2 chromatid cohesion factor homolog (625 aa).

TPR repeat units lie at residues 96–129, 451–484, and 491–524; these read FDTA…SQNN, GGFY…ANAE, and SCSL…ASKI. Residues 600-611 are compositionally biased toward polar residues; it reads TVPTTETSTSAL. The interval 600 to 625 is disordered; sequence TVPTTETSTSALQQPQQPAAQFGQFY. The span at 612–625 shows a compositional bias: low complexity; the sequence is QQPQQPAAQFGQFY.

It belongs to the SCC4/mau-2 family. As to quaternary structure, interacts with Nipped-B to form the cohesin loading complex.

It is found in the nucleus. The protein localises to the nucleoplasm. Required for association of the cohesin complex with chromatin during interphase. Plays a role in sister chromatid cohesion and normal progression through prometaphase. The protein is MAU2 chromatid cohesion factor homolog of Drosophila mojavensis (Fruit fly).